Here is a 211-residue protein sequence, read N- to C-terminus: Ras-related protein rab-11.1 (211 aa).

Glycine 18–asparagine 26 contributes to the GTP binding site. Positions serine 40–phenylalanine 48 match the Effector region motif. Residues aspartate 66–glutamine 70, asparagine 124–aspartate 127, and serine 154–leucine 156 each bind GTP. A disordered region spans residues glycine 187–proline 211. S-geranylgeranyl cysteine attachment occurs at residues cysteine 208 and cysteine 209.

Belongs to the small GTPase superfamily. Rab family. As to quaternary structure, interacts with rei-1 and rei-2. The GDP-form preferentially binds to rei-1 and rei-2. Expressed weakly in sperm, but more predominantly in oocytes. Expressed in the intestine.

It localises to the cytoplasmic vesicle. The protein resides in the secretory vesicle. It is found in the endosome. Its subcellular location is the cytoplasm. The protein localises to the cytoskeleton. It localises to the spindle. The protein resides in the microtubule organizing center. It is found in the spindle pole body. Its subcellular location is the centrosome. The protein localises to the apical cell membrane. It localises to the cytosol. The protein resides in the recycling endosome membrane. It is found in the golgi apparatus membrane. Its subcellular location is the cytoplasmic granule. The small GTPases Rab are key regulators of intracellular membrane trafficking, from the formation of transport vesicles to their fusion with membranes. Rabs cycle between an inactive GDP-bound form and an active GTP-bound form that is able to recruit to membranes different set of downstream effectors directly responsible for vesicle formation, movement, tethering and fusion. Involved in regulating the meiotic maturation of oocytes. Plays a role in egg shell formation, regulating exocytosis of chondroitin proteoglycans following fertilization. Controls cortical granule localization and targets them to the plasma membrane for exocytosis. Acts as a major regulator of membrane delivery during cytokinesis. Regulates the cytoskeleton by facilitating astral microtubule elongation and organization during metaphase to ensure proper spindle alignment and polarity in the first embryonic cell division. Maintains normal endoplasmic reticulum morphology during metaphase. Involved in vesicle formation and plasma membrane repair following exposure to pore forming toxins. Regulates endocytic recycling. May play a role in yolk receptor endocytosis in growing oocytes. Plays a role in the shedding of pathogen spores from intestinal cells via its involvement in spore fusion and endocytic trafficking. The polypeptide is Ras-related protein rab-11.1 (Caenorhabditis elegans).